The chain runs to 562 residues: mRNA cleavage and polyadenylation factor CLP1 (562 aa).

Residues 1 to 27 (MSLPGLELSQQPIEARRAPPQPTQISL) form a disordered region. Residues E32, K71, and 154 to 159 (DAGKTS) contribute to the ATP site. The segment at 415–483 (EDEYDPSKFD…STTPFTNLPS (69 aa)) is disordered. Over residues 445-479 (SLQPPSGLLPGLRSELPSATTGFPSASTSSTTPFT) the composition is skewed to low complexity.

This sequence belongs to the Clp1 family. Clp1 subfamily. As to quaternary structure, component of a pre-mRNA cleavage factor complex. Interacts directly with PCF11.

The protein localises to the nucleus. Its function is as follows. Required for endonucleolytic cleavage during polyadenylation-dependent pre-mRNA 3'-end formation. The chain is mRNA cleavage and polyadenylation factor CLP1 from Coccidioides immitis (strain RS) (Valley fever fungus).